Here is a 1611-residue protein sequence, read N- to C-terminus: Pentafunctional AROM polypeptide (1611 aa).

The segment at 1–406 (MSQVSGGKVP…VEERASTVSD (406 aa)) is 3-dehydroquinate synthase. Residues 64 to 66 (DTN), 97 to 100 (EESK), 128 to 130 (GGV), and Asp-133 each bind NAD(+). Arg-144 contacts 7-phospho-2-dehydro-3-deoxy-D-arabino-heptonate. 153–154 (TT) contributes to the NAD(+) binding site. 7-phospho-2-dehydro-3-deoxy-D-arabino-heptonate-binding residues include Asp-160 and Lys-166. Residue Lys-175 participates in NAD(+) binding. 7-phospho-2-dehydro-3-deoxy-D-arabino-heptonate is bound at residue Asn-176. Residues 193-196 (WLLT) and Asn-204 contribute to the NAD(+) site. Glu-208 contacts Zn(2+). 7-phospho-2-dehydro-3-deoxy-D-arabino-heptonate-binding positions include 208-211 (EVIK) and Lys-272. Glu-282 serves as the catalytic Proton acceptor; for 3-dehydroquinate synthase activity. Residues 286 to 290 (RNLVN) and His-293 each bind 7-phospho-2-dehydro-3-deoxy-D-arabino-heptonate. His-293 contacts Zn(2+). His-297 (proton acceptor; for 3-dehydroquinate synthase activity) is an active-site residue. The 7-phospho-2-dehydro-3-deoxy-D-arabino-heptonate site is built by His-309 and Lys-378. His-309 provides a ligand contact to Zn(2+). Residues 419–882 (VRESVSAPRP…WDVLGGPLNV (464 aa)) are EPSP synthase. Residue Cys-864 is the For EPSP synthase activity of the active site. Residues 915–1092 (DASIVLIGMR…VPISPAFFLS (178 aa)) form a shikimate kinase region. Position 922 to 929 (922 to 929 (GMRASGKS)) interacts with ATP. A 3-dehydroquinase region spans residues 1093–1309 (LTFPRVQDAW…AAPGQMSVRD (217 aa)). His-1212 functions as the Proton acceptor; for 3-dehydroquinate dehydratase activity in the catalytic mechanism. Lys-1240 (schiff-base intermediate with substrate; for 3-dehydroquinate dehydratase activity) is an active-site residue. A shikimate dehydrogenase region spans residues 1322–1611 (KRHFFLFGSP…AAYRAAAASM (290 aa)).

This sequence in the N-terminal section; belongs to the sugar phosphate cyclases superfamily. Dehydroquinate synthase family. The protein in the 2nd section; belongs to the EPSP synthase family. In the 3rd section; belongs to the shikimate kinase family. It in the 4th section; belongs to the type-I 3-dehydroquinase family. This sequence in the C-terminal section; belongs to the shikimate dehydrogenase family. Homodimer. Zn(2+) is required as a cofactor.

It localises to the cytoplasm. It carries out the reaction 7-phospho-2-dehydro-3-deoxy-D-arabino-heptonate = 3-dehydroquinate + phosphate. It catalyses the reaction 3-dehydroquinate = 3-dehydroshikimate + H2O. The enzyme catalyses shikimate + NADP(+) = 3-dehydroshikimate + NADPH + H(+). The catalysed reaction is shikimate + ATP = 3-phosphoshikimate + ADP + H(+). It carries out the reaction 3-phosphoshikimate + phosphoenolpyruvate = 5-O-(1-carboxyvinyl)-3-phosphoshikimate + phosphate. Its pathway is metabolic intermediate biosynthesis; chorismate biosynthesis; chorismate from D-erythrose 4-phosphate and phosphoenolpyruvate: step 2/7. It participates in metabolic intermediate biosynthesis; chorismate biosynthesis; chorismate from D-erythrose 4-phosphate and phosphoenolpyruvate: step 3/7. The protein operates within metabolic intermediate biosynthesis; chorismate biosynthesis; chorismate from D-erythrose 4-phosphate and phosphoenolpyruvate: step 4/7. It functions in the pathway metabolic intermediate biosynthesis; chorismate biosynthesis; chorismate from D-erythrose 4-phosphate and phosphoenolpyruvate: step 5/7. Its pathway is metabolic intermediate biosynthesis; chorismate biosynthesis; chorismate from D-erythrose 4-phosphate and phosphoenolpyruvate: step 6/7. Its function is as follows. The AROM polypeptide catalyzes 5 consecutive enzymatic reactions in prechorismate polyaromatic amino acid biosynthesis. This Malassezia globosa (strain ATCC MYA-4612 / CBS 7966) (Dandruff-associated fungus) protein is Pentafunctional AROM polypeptide.